Reading from the N-terminus, the 434-residue chain is uncharacterized protein (434 aa).

At Lys-216 the chain carries N6-(pyridoxal phosphate)lysine.

This is an uncharacterized protein from Schizosaccharomyces pombe (strain 972 / ATCC 24843) (Fission yeast).